Reading from the N-terminus, the 171-residue chain is ATP synthase subunit b (171 aa).

Residues 2–22 (FVVKMVLGFLILLSPLCATGL) form a helical membrane-spanning segment.

This sequence belongs to the ATPase B chain family. As to quaternary structure, F-type ATPases have 2 components, F(1) - the catalytic core - and F(0) - the membrane proton channel. F(1) has five subunits: alpha(3), beta(3), gamma(1), delta(1), epsilon(1). F(0) has three main subunits: a(1), b(2) and c(10-14). The alpha and beta chains form an alternating ring which encloses part of the gamma chain. F(1) is attached to F(0) by a central stalk formed by the gamma and epsilon chains, while a peripheral stalk is formed by the delta and b chains.

Its subcellular location is the cell inner membrane. In terms of biological role, f(1)F(0) ATP synthase produces ATP from ADP in the presence of a proton or sodium gradient. F-type ATPases consist of two structural domains, F(1) containing the extramembraneous catalytic core and F(0) containing the membrane proton channel, linked together by a central stalk and a peripheral stalk. During catalysis, ATP synthesis in the catalytic domain of F(1) is coupled via a rotary mechanism of the central stalk subunits to proton translocation. Component of the F(0) channel, it forms part of the peripheral stalk, linking F(1) to F(0). The chain is ATP synthase subunit b from Helicobacter pylori (strain J99 / ATCC 700824) (Campylobacter pylori J99).